A 94-amino-acid polypeptide reads, in one-letter code: uncharacterized protein (94 aa).

2 helical membrane passes run T9 to T29 and L34 to V54.

It is found in the cell membrane. This is an uncharacterized protein from Bacillus subtilis (strain 168).